Reading from the N-terminus, the 90-residue chain is Major mite allergen Der p 23 (90 aa).

Positions 1–21 (MKFNIIIVFISLAILVHSSYA) are cleaved as a signal peptide. Residues 22–42 (ANDNDDDPTTTVHPTTTEQPD) are disordered. Over residues 30–39 (TTTVHPTTTE) the composition is skewed to low complexity. A Chitin-binding type-2 domain is found at 44–90 (KFECPSRFGYFADPKDPHKFYICSNWEAVHKDCPGNTRWNEDEETCT). 2 disulfide bridges follow: cysteine 47/cysteine 66 and cysteine 76/cysteine 89. The segment at 52 to 90 (GYFADPKDPHKFYICSNWEAVHKDCPGNTRWNEDEETCT) is important for IgE-binding.

Monomer. As to expression, expressed in epithelial cells of the midgut.

It is found in the secreted. It localises to the endoplasmic reticulum. The protein localises to the cytoplasmic vesicle. Its function is as follows. Does not bind chitin in vitro. The chain is Major mite allergen Der p 23 from Dermatophagoides pteronyssinus (European house dust mite).